The chain runs to 580 residues: DNA mismatch repair protein MutL (580 aa).

The protein belongs to the DNA mismatch repair MutL/HexB family.

In terms of biological role, this protein is involved in the repair of mismatches in DNA. It is required for dam-dependent methyl-directed DNA mismatch repair. May act as a 'molecular matchmaker', a protein that promotes the formation of a stable complex between two or more DNA-binding proteins in an ATP-dependent manner without itself being part of a final effector complex. This Chlamydia caviae (strain ATCC VR-813 / DSM 19441 / 03DC25 / GPIC) (Chlamydophila caviae) protein is DNA mismatch repair protein MutL.